Reading from the N-terminus, the 350-residue chain is Serine-threonine kinase receptor-associated protein (350 aa).

WD repeat units follow at residues 12–56 (GHTR…GTFL), 57–96 (GHKGAVWGATLNKDATKAATAAADFTAKVWDAVSGDELMT), 98–137 (AHKHIVKTVDFTQDSNYLLTGGQDKLLRIYDLNKPEAEPK), 141–179 (GHTSGIKKALWCSEDKQILSADDKTVRLWDHATMTEVKS), 180–212 (LNFNMSVSSMEYIPEGEILVITYGRSIAFHSAV), 221–262 (EAPA…ESYK), and 263–302 (GHFGPIHCVRFSPDGELYASGSEDGTLRLWQTVVGKTYGL). A phosphoserine mark is found at serine 312, serine 335, and serine 338.

This sequence belongs to the WD repeat STRAP family. Part of the core SMN complex that contains SMN1, GEMIN2/SIP1, DDX20/GEMIN3, GEMIN4, GEMIN5, GEMIN6, GEMIN7, GEMIN8 and STRAP/UNRIP. Part of the SMN-Sm complex that contains SMN1, GEMIN2/SIP1, DDX20/GEMIN3, GEMIN4, GEMIN5, GEMIN6, GEMIN7, GEMIN8, STRAP/UNRIP and the Sm proteins SNRPB, SNRPD1, SNRPD2, SNRPD3, SNRPE, SNRPF and SNRPG. Associates with the SMN complex in the cytoplasm but not in the nucleus. Interacts with GEMIN6; the interaction is direct. Interacts with GEMIN7; the interaction is direct. Interacts with CSDE1/UNR and MAWBP. Interacts with PDPK1. Interacts with TRIM48.

The protein resides in the cytoplasm. Its subcellular location is the nucleus. The SMN complex catalyzes the assembly of small nuclear ribonucleoproteins (snRNPs), the building blocks of the spliceosome, and thereby plays an important role in the splicing of cellular pre-mRNAs. Most spliceosomal snRNPs contain a common set of Sm proteins SNRPB, SNRPD1, SNRPD2, SNRPD3, SNRPE, SNRPF and SNRPG that assemble in a heptameric protein ring on the Sm site of the small nuclear RNA to form the core snRNP (Sm core). In the cytosol, the Sm proteins SNRPD1, SNRPD2, SNRPE, SNRPF and SNRPG are trapped in an inactive 6S pICln-Sm complex by the chaperone CLNS1A that controls the assembly of the core snRNP. To assemble core snRNPs, the SMN complex accepts the trapped 5Sm proteins from CLNS1A forming an intermediate. Binding of snRNA inside 5Sm triggers eviction of the SMN complex, thereby allowing binding of SNRPD3 and SNRPB to complete assembly of the core snRNP. STRAP plays a role in the cellular distribution of the SMN complex. Negatively regulates TGF-beta signaling but positively regulates the PDPK1 kinase activity by enhancing its autophosphorylation and by significantly reducing the association of PDPK1 with 14-3-3 protein. This is Serine-threonine kinase receptor-associated protein (STRAP) from Homo sapiens (Human).